Consider the following 229-residue polypeptide: 3-dehydroquinate dehydratase (229 aa).

3-dehydroquinate is bound by residues 29–31 (ELR) and Arg-56. The Proton donor/acceptor role is filled by His-120. Residue Lys-146 is the Schiff-base intermediate with substrate of the active site. Residues Arg-187, Thr-208, and Gln-212 each contribute to the 3-dehydroquinate site.

Belongs to the type-I 3-dehydroquinase family. Homodimer.

The catalysed reaction is 3-dehydroquinate = 3-dehydroshikimate + H2O. It functions in the pathway metabolic intermediate biosynthesis; chorismate biosynthesis; chorismate from D-erythrose 4-phosphate and phosphoenolpyruvate: step 3/7. Its function is as follows. Involved in the third step of the chorismate pathway, which leads to the biosynthesis of aromatic amino acids. Catalyzes the cis-dehydration of 3-dehydroquinate (DHQ) and introduces the first double bond of the aromatic ring to yield 3-dehydroshikimate. The polypeptide is 3-dehydroquinate dehydratase (Haloarcula marismortui (strain ATCC 43049 / DSM 3752 / JCM 8966 / VKM B-1809) (Halobacterium marismortui)).